The chain runs to 636 residues: Threonine--tRNA ligase (636 aa).

The TGS domain maps to 1 to 60; it reads MPIINFNNKEILFNYPISIIEIIKKFDKNLSENCIAAKINGKLLDVSEIINYDGSLELVK. Residues 242–533 are catalytic; the sequence is DHRKIGKKLD…ITEEFSGKYP (292 aa). Cys-333, His-384, and His-510 together coordinate Zn(2+).

This sequence belongs to the class-II aminoacyl-tRNA synthetase family. As to quaternary structure, homodimer. The cofactor is Zn(2+).

It is found in the cytoplasm. It carries out the reaction tRNA(Thr) + L-threonine + ATP = L-threonyl-tRNA(Thr) + AMP + diphosphate + H(+). Functionally, catalyzes the attachment of threonine to tRNA(Thr) in a two-step reaction: L-threonine is first activated by ATP to form Thr-AMP and then transferred to the acceptor end of tRNA(Thr). Also edits incorrectly charged L-seryl-tRNA(Thr). The chain is Threonine--tRNA ligase from Wigglesworthia glossinidia brevipalpis.